Here is a 555-residue protein sequence, read N- to C-terminus: Glutamine--tRNA ligase (555 aa).

Residues 35 to 45 (PEPNGYLHIGH) carry the 'HIGH' region motif. ATP-binding positions include 36 to 38 (EPN) and 42 to 48 (HIGHAKS). 2 residues coordinate L-glutamine: D68 and Y213. ATP contacts are provided by residues T232 and 262-263 (RL). The short motif at 269-273 (ITSKR) is the 'KMSKS' region element.

This sequence belongs to the class-I aminoacyl-tRNA synthetase family. Monomer.

The protein localises to the cytoplasm. It carries out the reaction tRNA(Gln) + L-glutamine + ATP = L-glutaminyl-tRNA(Gln) + AMP + diphosphate. The protein is Glutamine--tRNA ligase of Stutzerimonas stutzeri (strain A1501) (Pseudomonas stutzeri).